Consider the following 287-residue polypeptide: Cell wall protein PIR5 (287 aa).

An N-terminal signal peptide occupies residues 1-21 (MHYKKAFLASLLSSIALTAYA). The propeptide occupies 22–62 (PPEPWATLTPSSKMDGGTTEYRTSFGLAVIPFTVTESKVKR). PIR1/2/3 repeat units follow at residues 62-80 (RNVI…TQKL), 81-99 (PHPV…TQKV), 104-122 (SHIV…TAKN), and 144-162 (ATAV…ISSA).

Belongs to the PIR protein family. In terms of processing, covalently linked to beta-1,3-glucan of the inner cell wall layer via an alkali-sensitive ester linkage between the gamma-carboxyl group of glutamic acids, arising from specific glutamines within the PIR1/2/3 repeats, and hydroxyl groups of glucoses of beta-1,3-glucan chains.

It localises to the secreted. The protein localises to the cell wall. Component of the outer cell wall layer. May be involved in meiosis and sporulation. This is Cell wall protein PIR5 (PIR5) from Saccharomyces cerevisiae (strain YJM789) (Baker's yeast).